The following is a 934-amino-acid chain: Protein translocase subunit SecA (934 aa).

Residues Q90, 108–112, and D509 each bind ATP; that span reads GEGKT. Residues 535 to 565 are disordered; sequence PEEDHTPPVPLQRSAPGGFSDAAAPSLPRSG.

Belongs to the SecA family. Monomer and homodimer. Part of the essential Sec protein translocation apparatus which comprises SecA, SecYEG and auxiliary proteins SecDF. Other proteins may also be involved.

It localises to the cell inner membrane. The protein localises to the cellular thylakoid membrane. It is found in the cytoplasm. It carries out the reaction ATP + H2O + cellular proteinSide 1 = ADP + phosphate + cellular proteinSide 2.. Part of the Sec protein translocase complex. Interacts with the SecYEG preprotein conducting channel. Has a central role in coupling the hydrolysis of ATP to the transfer of proteins into and across the cell membrane, serving as an ATP-driven molecular motor driving the stepwise translocation of polypeptide chains across the membrane. In terms of biological role, probably participates in protein translocation into and across both the cytoplasmic and thylakoid membranes in cyanobacterial cells. This is Protein translocase subunit SecA from Synechococcus sp. (strain CC9605).